A 1074-amino-acid polypeptide reads, in one-letter code: DNA primase (1074 aa).

The segment at 1012-1052 (CVRFKHARARRASARSYLALNVDAHGRLCVCVIQQCFAAKC) adopts a CHC2-type zinc-finger fold.

Belongs to the herpesviridae DNA primase family. In terms of assembly, associates with the helicase and the primase-associated factor to form the helicase-primase factor.

Its subcellular location is the host nucleus. Functionally, essential component of the helicase/primase complex. Unwinds the DNA at the replication forks and generates single-stranded DNA for both leading and lagging strand synthesis. The primase initiates primer synthesis and thereby produces large amount of short RNA primers on the lagging strand that the polymerase elongates using dNTPs. The protein is DNA primase (MDV066) of Gallus gallus (Chicken).